An 877-amino-acid chain; its full sequence is DNA polymerase I (877 aa).

The 5'-3' exonuclease domain occupies 1 to 310 (MKKKLVLIDG…FTLADRVTEE (310 aa)). In terms of domain architecture, 3'-5' exonuclease spans 311 to 465 (MLADKAALVV…ALERPFLDEL (155 aa)). Residues 469–877 (EQDRLLVELE…HYGSTWYDAK (409 aa)) form a polymerase region.

This sequence belongs to the DNA polymerase type-A family. Single-chain monomer with multiple functions.

It carries out the reaction DNA(n) + a 2'-deoxyribonucleoside 5'-triphosphate = DNA(n+1) + diphosphate. Functionally, in addition to polymerase activity, this DNA polymerase exhibits 3'-5' and 5'-3' exonuclease activity. In Bacillus caldotenax, this protein is DNA polymerase I (polA).